Here is a 100-residue protein sequence, read N- to C-terminus: Pancreatic polypeptide prohormone (100 aa).

The first 29 residues, 1–29 (MAVAYCCLSLFLVSTWVALLLQPLQGTWG), serve as a signal peptide directing secretion. Tyrosine amide is present on Tyr65.

It belongs to the NPY family. Post-translationally, no icosapeptide-like peptide is cleaved from the C-terminal.

The protein localises to the secreted. Functionally, hormone secreted by pancreatic cells that acts as a regulator of pancreatic and gastrointestinal functions probably by signaling through the G protein-coupled receptor NPY4R2. This chain is Pancreatic polypeptide prohormone (Ppy), found in Mus musculus (Mouse).